A 145-amino-acid polypeptide reads, in one-letter code: Basic phospholipase A2 cPm08 (145 aa).

Positions 1-21 are cleaved as a signal peptide; sequence MYPAHLLVLLAVCVSLLGASA. Residues 22-27 constitute a propeptide that is removed on maturation; the sequence is IPPLPL. Intrachain disulfides connect C38–C98, C54–C144, C56–C72, C71–C125, C78–C118, C87–C111, and C105–C116. Residues Y55, G57, and G59 each contribute to the Ca(2+) site. Residue H75 is part of the active site. Position 76 (D76) interacts with Ca(2+). D119 is a catalytic residue.

This sequence belongs to the phospholipase A2 family. Group I subfamily. D49 sub-subfamily. It depends on Ca(2+) as a cofactor. In terms of tissue distribution, expressed by the venom gland.

The protein localises to the secreted. It carries out the reaction a 1,2-diacyl-sn-glycero-3-phosphocholine + H2O = a 1-acyl-sn-glycero-3-phosphocholine + a fatty acid + H(+). Its function is as follows. PLA2 catalyzes the calcium-dependent hydrolysis of the 2-acyl groups in 3-sn-phosphoglycerides. This is Basic phospholipase A2 cPm08 from Laticauda semifasciata (Black-banded sea krait).